Consider the following 649-residue polypeptide: Transcription factor E2-alpha (649 aa).

Disordered regions lie at residues 34–107 (GKGR…SERS), 127–206 (LPGE…SAKT), 222–267 (LHPS…GLQQ), 291–325 (SAAPGTYGGASGHTPPVSGADSLMGTRGTTASSSG), and 339–382 (DHSS…DGGL). Composition is skewed to polar residues over residues 56–76 (SSGSWGNSDQNSSSFDPSRTY) and 85–94 (SHNSLPSSTF). Residues 127–143 (LPGELGLSSPGPLSPSG) are compositionally biased toward low complexity. A phosphoserine mark is found at S135 and S140. Residues 145–156 (KSGSQYYPSYPS) show a composition bias toward polar residues. The short motif at 171–177 (SKKVRKV) is the Nuclear localization signal element. 2 stretches are compositionally biased toward low complexity: residues 182-193 (PSSVYPSSSGDS) and 242-259 (GDGSSPLPLAPGSSSVGS). Residues 339–352 (DHSSNNFSPSPSTP) are compositionally biased toward low complexity. T351 is subject to Phosphothreonine. S355 is modified (phosphoserine). At R367 the chain carries Omega-N-methylarginine. S375 is modified (phosphoserine). The leucine-zipper stretch occupies residues 385–420 (LSKMEDRLDEAIHVLRSHAVGTASDLHGLLPGHGAL). Residues 431–547 (GGRHAGLVGG…KAEREKERRV (117 aa)) are disordered. Residues 448-469 (TSGTSLLHTHASLPSQASSLPD) are compositionally biased toward polar residues. Residue K494 forms a Glycyl lysine isopeptide (Lys-Gly) (interchain with G-Cter in SUMO2) linkage. The residue at position 524 (S524) is a Phosphoserine. E529 is modified (phosphothreonine). Residues 537 to 547 (QKAEREKERRV) are compositionally biased toward basic and acidic residues. In terms of domain architecture, bHLH spans 544–597 (ERRVANNARERLRVRDINEAFKELGRMCQLHLSSEKPQTKLLILHQAVAVILSL). K620 participates in a covalent cross-link: Glycyl lysine isopeptide (Lys-Gly) (interchain with G-Cter in SUMO2).

In terms of assembly, homodimer. Heterodimer; efficient DNA binding requires dimerization with another bHLH protein. Forms a heterodimer with TWIST1 and TWIST2. Forms a heterodimer with NEUROD1; the heterodimer is inhibited in presence of ID2, but not NR0B2, to E-box element. Forms a heterodimer with TCF15; the heterodimer binds E-box element. Forms a heterodimer with MYOG; heterodimerization enhances MYOG DNA-binding and transcriptional activities. Forms a heterodimer with ATOH8; repress transcription of TCF3 and TCF3-NEUROG3 dimer-induced transactivation of E box-dependent promoters. Component of a nuclear TAL-1 complex composed at least of CBFA2T3, LDB1, TAL1 and TCF3. Interacts with NEUROD2. Interacts with EP300. Interacts with PTF1A, TGFB1I1 and UBE2I. Interacts with BHLHA9. Interacts with ASB2; the interaction is mediated by SKP2 and targets TCF3 for Notch-induced proteasomal degradation. Interacts with transcription factor ASCL5/AmeloD. As to quaternary structure, interacts with RALGAPA1. Interacts with FIGLA. Forms a heterodimer with ATOH7; required for ATOH7 DNA-binding. In terms of processing, phosphorylated following NGF stimulation. Post-translationally, undergoes Notch-induced ubiquitination and subsequent proteasomal degradation which is mediated by ASB1 or ASB2, the substrate-recognition components of probable ECS E3 ubiquitin-protein ligase complexes.

Its subcellular location is the nucleus. In terms of biological role, transcriptional regulator. Involved in the initiation of neuronal differentiation and mesenchymal to epithelial transition. Heterodimers between TCF3 and tissue-specific basic helix-loop-helix (bHLH) proteins play major roles in determining tissue-specific cell fate during embryogenesis, like muscle or early B-cell differentiation. Together with TCF15, required for the mesenchymal to epithelial transition. Dimers bind DNA on E-box motifs: 5'-CANNTG-3'. Binds to the kappa-E2 site in the kappa immunoglobulin gene enhancer. Binds to IEB1 and IEB2, which are short DNA sequences in the insulin gene transcription control region. Its function is as follows. Facilitates ATOH7 binding to DNA at the consensus sequence 5'-CAGGTG-3', and positively regulates transcriptional activity. This is Transcription factor E2-alpha (TCF3) from Mesocricetus auratus (Golden hamster).